We begin with the raw amino-acid sequence, 425 residues long: Bifunctional phosphoribosylaminoimidazole carboxylase/phosphoribosylaminoimidazole succinocarboxamide synthetase (425 aa).

N-acetylalanine is present on A2. The tract at residues 2-260 is SAICAR synthetase domain; sequence ATAEVLNIGK…WVAERVELLL (259 aa). Y22 is subject to Phosphotyrosine. S27 carries the post-translational modification Phosphoserine. N6-acetyllysine is present on K36. S107 carries the phosphoserine modification. T238 bears the Phosphothreonine mark. Position 247 is an N6-acetyllysine (K247). Positions 261–266 are linker; that stretch reads KSESQC. The segment at 267–425 is AIR carboxylase domain; sequence RVVVLMGSTS…ADKKIRECNL (159 aa). A Phosphoserine modification is found at S274. CO2 is bound at residue S332.

In the N-terminal section; belongs to the SAICAR synthetase family. This sequence in the C-terminal section; belongs to the AIR carboxylase family. Class II subfamily. As to quaternary structure, homooctamer.

The enzyme catalyses 5-amino-1-(5-phospho-D-ribosyl)imidazole-4-carboxylate + L-aspartate + ATP = (2S)-2-[5-amino-1-(5-phospho-beta-D-ribosyl)imidazole-4-carboxamido]succinate + ADP + phosphate + 2 H(+). The catalysed reaction is 5-amino-1-(5-phospho-D-ribosyl)imidazole-4-carboxylate + H(+) = 5-amino-1-(5-phospho-beta-D-ribosyl)imidazole + CO2. It participates in purine metabolism; IMP biosynthesis via de novo pathway; 5-amino-1-(5-phospho-D-ribosyl)imidazole-4-carboxamide from 5-amino-1-(5-phospho-D-ribosyl)imidazole-4-carboxylate: step 1/2. It functions in the pathway purine metabolism; IMP biosynthesis via de novo pathway; 5-amino-1-(5-phospho-D-ribosyl)imidazole-4-carboxylate from 5-amino-1-(5-phospho-D-ribosyl)imidazole (carboxylase route): step 1/1. In terms of biological role, bifunctional phosphoribosylaminoimidazole carboxylase and phosphoribosylaminoimidazole succinocarboxamide synthetase catalyzing two reactions of the de novo purine biosynthetic pathway. In Homo sapiens (Human), this protein is Bifunctional phosphoribosylaminoimidazole carboxylase/phosphoribosylaminoimidazole succinocarboxamide synthetase.